Reading from the N-terminus, the 216-residue chain is Ras-like protein rasW (216 aa).

A GTP-binding site is contributed by 16–23 (GDGGVGKT). The Effector region signature appears at 38–46 (YDPTIEDSY). GTP-binding positions include 63–67 (DTAGQ) and 122–125 (NKID). The segment at 171–193 (KRKEDPQSHKPSKDSDSKKPLVN) is disordered. Positions 172–189 (RKEDPQSHKPSKDSDSKK) are enriched in basic and acidic residues. A Cysteine methyl ester modification is found at cysteine 213. Cysteine 213 carries S-geranylgeranyl cysteine lipidation. The propeptide at 214 to 216 (KMM) is removed in mature form.

It belongs to the small GTPase superfamily. Ras family.

Its subcellular location is the cell membrane. The enzyme catalyses GTP + H2O = GDP + phosphate + H(+). Ras proteins bind GDP/GTP and possess intrinsic GTPase activity. The protein is Ras-like protein rasW (rasW) of Dictyostelium discoideum (Social amoeba).